A 381-amino-acid polypeptide reads, in one-letter code: Glucose-1-phosphate adenylyltransferase (381 aa).

Alpha-D-glucose 1-phosphate is bound by residues Tyr100, Gly165, 180–181, and Ser191; that span reads EK.

It belongs to the bacterial/plant glucose-1-phosphate adenylyltransferase family. In terms of assembly, homotetramer.

The catalysed reaction is alpha-D-glucose 1-phosphate + ATP + H(+) = ADP-alpha-D-glucose + diphosphate. Its pathway is glycan biosynthesis; glycogen biosynthesis. In terms of biological role, involved in the biosynthesis of ADP-glucose, a building block required for the elongation reactions to produce glycogen. Catalyzes the reaction between ATP and alpha-D-glucose 1-phosphate (G1P) to produce pyrophosphate and ADP-Glc. In Mycoplasma mobile (strain ATCC 43663 / 163K / NCTC 11711) (Mesomycoplasma mobile), this protein is Glucose-1-phosphate adenylyltransferase.